The chain runs to 368 residues: Seven-bladed beta-propeller protein MSMEG_5308 (368 aa).

Interacts with MmpL3 and TtfA.

The protein resides in the cell septum. It localises to the cell tip. In terms of biological role, stabilizes the MmpL3/TtfA trehalose monomycolate (TMM) transport complex under stress conditions. In Mycolicibacterium smegmatis (strain ATCC 700084 / mc(2)155) (Mycobacterium smegmatis), this protein is Seven-bladed beta-propeller protein MSMEG_5308.